The primary structure comprises 1664 residues: Peroxisome proliferator-activated receptor gamma coactivator-related protein 1 (1664 aa).

Disordered regions lie at residues 1–44 (MAAR…GTLG), 167–255 (LLTL…VASF), 436–555 (PVVP…EGPL), 681–701 (VDPV…VSSA), 735–793 (IESG…ADIP), 818–873 (CLVP…PTPP), and 1045–1068 (HGAP…HPKH). Over residues 12-22 (APPPSGGPGPD) the composition is skewed to pro residues. Gly residues predominate over residues 23–32 (PGGGARGSGW). The span at 201–224 (SLPDPSWDFSPPSFLETSSPKLPS) shows a compositional bias: low complexity. Phosphoserine is present on serine 237. The necessary for interaction with CREB1 and NRF1 and for transcriptional coactivation stretch occupies residues 433–467 (VVEPVVPKEPQNPPANAAPGSQRARKGRKKKSKEQ). Over residues 455–464 (RARKGRKKKS) the composition is skewed to basic residues. A compositionally biased stretch (polar residues) spans 482-499 (SSRGQSTVGTEVTSQVDN). Residues 522–531 (RAWARAWAAA) show a composition bias toward low complexity. The span at 533–549 (ENSSPKNLERSAGQSSP) shows a compositional bias: polar residues. Residues serine 536 and serine 548 each carry the phosphoserine modification. Positions 823–836 (GPSPASPSPEPPVS) are enriched in pro residues. Over residues 862-873 (VQSVSPAVPTPP) the composition is skewed to low complexity. Serine 1076 is modified (phosphoserine). Disordered regions lie at residues 1093-1130 (EEPA…STVP), 1182-1209 (SEAK…DIPQ), and 1334-1528 (VLSL…DHYQ). The span at 1096 to 1113 (ASERLKPETQETRPREKP) shows a compositional bias: basic and acidic residues. Residues 1365 to 1383 (PSAPCLAPSSLLSPEASPC) show a composition bias toward low complexity. The interval 1379–1450 (EASPCRNDMN…SSSSSSSSSS (72 aa)) is necessary for interaction with CREB1 and NRF1. Residues 1400 to 1409 (RSMRCYRKAC) show a composition bias toward basic residues. 2 positions are modified to phosphoserine: serine 1411 and serine 1413. Low complexity-rich tracts occupy residues 1427 to 1459 (SRSV…RSLS) and 1468 to 1500 (SSCS…SSSR). Over residues 1501-1519 (SRSRSPSPRRRSDRRRRYS) the composition is skewed to basic residues. Residues 1543–1619 (RVVFIGKIPG…QPFDLCFGGR (77 aa)) form the RRM domain.

As to quaternary structure, interacts with CREB1 and NRF1. In terms of tissue distribution, strongly expressed in heart and skeletal muscle, moderately in lung, placenta, intestine, liver, kidney, spleen, thymus, colon and brain. Also expressed in several oncocytic thyroid tumors.

The protein resides in the nucleus. Functionally, acts as a coactivator during transcriptional activation of nuclear genes related to mitochondrial biogenesis and cell growth. Involved in the transcription coactivation of CREB and NRF1 target genes. This Homo sapiens (Human) protein is Peroxisome proliferator-activated receptor gamma coactivator-related protein 1 (PPRC1).